A 128-amino-acid polypeptide reads, in one-letter code: Large ribosomal subunit protein bL12 (128 aa).

In terms of assembly, homodimer. Part of the 50S ribosomal subunit; present in 6 copies per ribosome. Forms part of the ribosomal stalk which helps the ribosome interact with GTP-bound translation factors. Forms a heptameric L10(L12)2(L12)2(L12)2 complex, where L10 forms an elongated spine to which 3 L12 dimers bind in a sequential fashion.

Functionally, forms part of the ribosomal stalk which helps the ribosome interact with GTP-bound translation factors. Is thus essential for accurate translation. The polypeptide is Large ribosomal subunit protein bL12 (Thermotoga maritima (strain ATCC 43589 / DSM 3109 / JCM 10099 / NBRC 100826 / MSB8)).